Here is a 382-residue protein sequence, read N- to C-terminus: Na(+)/H(+) antiporter NhaA (382 aa).

A run of 10 helical transmembrane segments spans residues 11-31, 47-67, 88-108, 116-136, 145-165, 170-190, 261-283, 299-319, 327-347, and 353-373; these read FSVP…LDPA, FHFV…AVEI, LATL…NAII, GWGI…RLVF, FLLL…AVFY, HPTE…AYIL, IVVD…SSVG, LGIF…PQQV, TGLV…VAFV, and GSAK…IMLG.

Belongs to the NhaA Na(+)/H(+) (TC 2.A.33) antiporter family.

It localises to the cell inner membrane. It catalyses the reaction Na(+)(in) + 2 H(+)(out) = Na(+)(out) + 2 H(+)(in). In terms of biological role, na(+)/H(+) antiporter that extrudes sodium in exchange for external protons. In Geobacter sulfurreducens (strain ATCC 51573 / DSM 12127 / PCA), this protein is Na(+)/H(+) antiporter NhaA.